The following is a 73-amino-acid chain: Sec-independent protein translocase protein TatA (73 aa).

A helical membrane pass occupies residues 1 to 21 (MGSFSIWHWLIVLVIVMLVFG). Residues 44–73 (KSAEDPNEQIPQSTTTAEKTVDVQAKDINK) are disordered. Residues 52-61 (QIPQSTTTAE) are compositionally biased toward polar residues. Residues 62–73 (KTVDVQAKDINK) show a composition bias toward basic and acidic residues.

Belongs to the TatA/E family. The Tat system comprises two distinct complexes: a TatABC complex, containing multiple copies of TatA, TatB and TatC subunits, and a separate TatA complex, containing only TatA subunits. Substrates initially bind to the TatABC complex, which probably triggers association of the separate TatA complex to form the active translocon.

Its subcellular location is the cell inner membrane. Part of the twin-arginine translocation (Tat) system that transports large folded proteins containing a characteristic twin-arginine motif in their signal peptide across membranes. TatA could form the protein-conducting channel of the Tat system. This chain is Sec-independent protein translocase protein TatA, found in Polynucleobacter asymbioticus (strain DSM 18221 / CIP 109841 / QLW-P1DMWA-1) (Polynucleobacter necessarius subsp. asymbioticus).